Consider the following 332-residue polypeptide: MASTASFMLAVLLAVAVAAAPARAVRCPPSDKQALMRVKQSLGNPATLSTWSLASADCCEWDHVRCDEAGRVNNVFIDGANDVRGQIPSAVAGLTALMSLSLFRLPGLSGPIPACLTALSNLQFLTISHTNVSGVIPDSLARIRSLDSVDLSHNSLTGPIPNSFSDLPNLRSLDLRSNKLTGCIPAGLVQGQFRSLILSYNQLTGPIPRDDAQDEINTVDLSHNRLTGDASFLFAAGRPIGKVDLSWNDLDFDLSKLVFPPELTYLDLSHNRIRGTVPRSLAALSTLQTLDLSYNRLCGPLPRLHGVIRHGCKPYEHNQCAGGAPLGGCHQS.

A signal peptide spans 1 to 24 (MASTASFMLAVLLAVAVAAAPARA). Intrachain disulfides connect Cys-27–Cys-58 and Cys-59–Cys-66. 10 LRR repeats span residues 72–96 (VNNVFIDGANDVRGQIPSAVAGLTA), 97–118 (LMSLSLFRLPGLSGPIPACLTA), 119–142 (LSNLQFLTISHTNVSGVIPDSLAR), 143–166 (IRSLDSVDLSHNSLTGPIPNSFSD), 167–192 (LPNLRSLDLRSNKLTGCIPAGLVQGQ), 193–215 (FRSLILSYNQLTGPIPRDDAQDE), 216–236 (INTVDLSHNRLTGDASFLFAA), 237–259 (GRPIGKVDLSWNDLDFDLSKLVF), 260–283 (PPELTYLDLSHNRIRGTVPRSLAA), and 284–310 (LSTLQTLDLSYNRLCGPLPRLHGVIRH). Asn-131 carries an N-linked (GlcNAc...) asparagine glycan. 3 disulfides stabilise this stretch: Cys-298–Cys-312, Cys-298–Cys-320, and Cys-320–Cys-329.

The protein belongs to the polygalacturonase-inhibiting protein family. As to expression, highly expressed in calli, immature and mature panicles, and in three inner floral organs: lodicules, stamens and carpels. Expressed at low level in seedling roots and mature stems.

The protein localises to the secreted. It is found in the cell wall. Functionally, inhibitor of fungal polygalacturonase. Regulates floral organ number. This is Polygalacturonase inhibitor 1 from Oryza sativa subsp. japonica (Rice).